The following is a 37-amino-acid chain: Large ribosomal subunit protein bL36 (37 aa).

The protein belongs to the bacterial ribosomal protein bL36 family.

The protein is Large ribosomal subunit protein bL36 of Mycoplasma pneumoniae (strain ATCC 29342 / M129 / Subtype 1) (Mycoplasmoides pneumoniae).